We begin with the raw amino-acid sequence, 187 residues long: Large ribosomal subunit protein uL5 (187 aa).

It belongs to the universal ribosomal protein uL5 family. In terms of assembly, part of the 50S ribosomal subunit; part of the 5S rRNA/L5/L18/L25 subcomplex. Contacts the 5S rRNA and the P site tRNA. Forms a bridge to the 30S subunit in the 70S ribosome.

In terms of biological role, this is one of the proteins that bind and probably mediate the attachment of the 5S RNA into the large ribosomal subunit, where it forms part of the central protuberance. In the 70S ribosome it contacts protein S13 of the 30S subunit (bridge B1b), connecting the 2 subunits; this bridge is implicated in subunit movement. Contacts the P site tRNA; the 5S rRNA and some of its associated proteins might help stabilize positioning of ribosome-bound tRNAs. This chain is Large ribosomal subunit protein uL5, found in Mycobacterium leprae (strain Br4923).